Reading from the N-terminus, the 335-residue chain is Cell division protein ZipA (335 aa).

Topologically, residues M1–L6 are periplasmic. The chain crosses the membrane as a helical span at residues V7–I27. Over R28 to M335 the chain is Cytoplasmic. Disordered stretches follow at residues E37 to V128 and R163 to E185. A compositionally biased stretch (low complexity) spans A170–E185.

This sequence belongs to the ZipA family. Interacts with FtsZ via their C-terminal domains.

It localises to the cell inner membrane. In terms of biological role, essential cell division protein that stabilizes the FtsZ protofilaments by cross-linking them and that serves as a cytoplasmic membrane anchor for the Z ring. Also required for the recruitment to the septal ring of downstream cell division proteins. This chain is Cell division protein ZipA, found in Shewanella loihica (strain ATCC BAA-1088 / PV-4).